The chain runs to 378 residues: Acetylornithine deacetylase (378 aa).

Zn(2+) is bound at residue His76. The active site involves Asp78. Asp108 is a Zn(2+) binding site. Residue Glu140 is part of the active site. Residues Glu141, Glu165, and His351 each coordinate Zn(2+).

Belongs to the peptidase M20A family. ArgE subfamily. As to quaternary structure, homodimer. Requires Zn(2+) as cofactor. It depends on Co(2+) as a cofactor. The cofactor is glutathione.

It is found in the cytoplasm. It carries out the reaction N(2)-acetyl-L-ornithine + H2O = L-ornithine + acetate. It functions in the pathway amino-acid biosynthesis; L-arginine biosynthesis; L-ornithine from N(2)-acetyl-L-ornithine (linear): step 1/1. Catalyzes the hydrolysis of the amide bond of N(2)-acetylated L-amino acids. Cleaves the acetyl group from N-acetyl-L-ornithine to form L-ornithine, an intermediate in L-arginine biosynthesis pathway, and a branchpoint in the synthesis of polyamines. This is Acetylornithine deacetylase from Vibrio parahaemolyticus serotype O3:K6 (strain RIMD 2210633).